A 563-amino-acid chain; its full sequence is Putative cysteine ligase BshC (563 aa).

The protein belongs to the BshC family.

This Chlorobium phaeobacteroides (strain BS1) protein is Putative cysteine ligase BshC.